We begin with the raw amino-acid sequence, 468 residues long: Ammonium transporter Amt2 (468 aa).

12 helical membrane-spanning segments follow: residues 1–21, 39–59, 77–97, 123–143, 156–176, 194–214, 236–256, 268–288, 297–317, 321–341, 350–370, and 400–420; these read MVGRMCVAVLIVLLLVATAGA, FVWALICGFLVMFMQAGFAML, LMDFAVGSLAFFAVGFALMMG, LWFFMLVFAATAATIVSGSIA, AVVSAVIYPIYGHWLWGGGWL, FAGSGVVHALGGYIALAAVML, LAFAVIGTFILWFGWFGFNAG, IIASNTNLAAAAGAVTAMAIT, VGMTCNGAVAGLVAITAPCAW, WSSVVIGTIAGFIATYGYWWL, VGAIPVHGFSGTWGLIALGIF, and LISAIVNFAWAFGTGFALFWI.

The protein belongs to the ammonia transporter channel (TC 1.A.11.2) family. Homotrimer.

The protein localises to the cell membrane. Functionally, involved in the uptake of ammonium/ammonia (NH(4)(+)/NH(3)). Transport is electrogenic. This is Ammonium transporter Amt2 from Archaeoglobus fulgidus (strain ATCC 49558 / DSM 4304 / JCM 9628 / NBRC 100126 / VC-16).